A 142-amino-acid chain; its full sequence is Large ribosomal subunit protein uL13 (142 aa).

Belongs to the universal ribosomal protein uL13 family. As to quaternary structure, part of the 50S ribosomal subunit.

Functionally, this protein is one of the early assembly proteins of the 50S ribosomal subunit, although it is not seen to bind rRNA by itself. It is important during the early stages of 50S assembly. This Psychrobacter cryohalolentis (strain ATCC BAA-1226 / DSM 17306 / VKM B-2378 / K5) protein is Large ribosomal subunit protein uL13.